The primary structure comprises 110 residues: Body wall hemoglobin (110 aa).

One can recognise a Globin domain in the interval 2–110 (VNWAAVVDAF…GAVDAIISHF (109 aa)). His70 serves as a coordination point for heme.

Belongs to the globin family. In terms of assembly, homotetramer.

In Cerebratulus lacteus (Milky ribbon worm), this protein is Body wall hemoglobin.